A 355-amino-acid chain; its full sequence is Elongation factor Ts (355 aa).

The involved in Mg(2+) ion dislocation from EF-Tu stretch occupies residues 82–85 (TDFV).

The protein belongs to the EF-Ts family.

It is found in the cytoplasm. Functionally, associates with the EF-Tu.GDP complex and induces the exchange of GDP to GTP. It remains bound to the aminoacyl-tRNA.EF-Tu.GTP complex up to the GTP hydrolysis stage on the ribosome. The protein is Elongation factor Ts of Helicobacter hepaticus (strain ATCC 51449 / 3B1).